We begin with the raw amino-acid sequence, 955 residues long: uncharacterized protein (955 aa).

A signal peptide spans 1 to 24 (MQSSLIKILGVLAIVATLVCFVFA). The segment at 127–146 (STRPGKSNLDDNGKMIPIPR) is disordered. 6 helical membrane passes run 597–617 (IKAL…LGFA), 707–727 (LGLS…IVII), 739–759 (AFMA…FLLF), 781–801 (VVLM…LDFV), 818–838 (FIGT…INWF), and 857–877 (IVAL…SGNM). The interval 905-955 (LSQVGMDEKTRKGITGRAKERLKQRNETLKQAEKTRKNAPKEEPPKAEIPK) is disordered. Positions 910–955 (MDEKTRKGITGRAKERLKQRNETLKQAEKTRKNAPKEEPPKAEIPK) are enriched in basic and acidic residues.

This sequence belongs to the TrbL/VirB6 family.

It is found in the cell membrane. This is an uncharacterized protein from Rickettsia bellii (strain RML369-C).